We begin with the raw amino-acid sequence, 563 residues long: Dihydroxy-acid dehydratase (563 aa).

Asp-79 lines the Mg(2+) pocket. Cys-120 lines the [2Fe-2S] cluster pocket. Positions 121 and 122 each coordinate Mg(2+). Lys-122 carries the post-translational modification N6-carboxylysine. Cys-193 contributes to the [2Fe-2S] cluster binding site. Residue Glu-451 coordinates Mg(2+). The active-site Proton acceptor is the Ser-477.

This sequence belongs to the IlvD/Edd family. In terms of assembly, homodimer. It depends on [2Fe-2S] cluster as a cofactor. Requires Mg(2+) as cofactor.

The enzyme catalyses (2R)-2,3-dihydroxy-3-methylbutanoate = 3-methyl-2-oxobutanoate + H2O. It catalyses the reaction (2R,3R)-2,3-dihydroxy-3-methylpentanoate = (S)-3-methyl-2-oxopentanoate + H2O. The protein operates within amino-acid biosynthesis; L-isoleucine biosynthesis; L-isoleucine from 2-oxobutanoate: step 3/4. It functions in the pathway amino-acid biosynthesis; L-valine biosynthesis; L-valine from pyruvate: step 3/4. Functionally, functions in the biosynthesis of branched-chain amino acids. Catalyzes the dehydration of (2R,3R)-2,3-dihydroxy-3-methylpentanoate (2,3-dihydroxy-3-methylvalerate) into 2-oxo-3-methylpentanoate (2-oxo-3-methylvalerate) and of (2R)-2,3-dihydroxy-3-methylbutanoate (2,3-dihydroxyisovalerate) into 2-oxo-3-methylbutanoate (2-oxoisovalerate), the penultimate precursor to L-isoleucine and L-valine, respectively. The protein is Dihydroxy-acid dehydratase of Sulfurovum sp. (strain NBC37-1).